We begin with the raw amino-acid sequence, 857 residues long: Putative disease resistance protein At1g50180 (857 aa).

The stretch at 27–60 (IGDQVKQLQDELKRLNCFLKDADEKQHESERVRN) forms a coiled coil. The NB-ARC domain occupies 148–461 (SLREQRQSFP…AEGMVMPVKH (314 aa)). Position 192–199 (192–199 (GMGGLGKT)) interacts with ATP. LRR repeat units lie at residues 653–678 (MTSL…SLSK), 680–703 (LKRL…DVTQ), 754–780 (LPNL…NLEN), and 791–816 (MMRL…RFLK).

This sequence belongs to the disease resistance NB-LRR family.

Its function is as follows. Potential disease resistance protein. This is Putative disease resistance protein At1g50180 from Arabidopsis thaliana (Mouse-ear cress).